Consider the following 201-residue polypeptide: Protocatechuate 3,4-dioxygenase alpha chain (201 aa).

R134 contributes to the 3,4-dihydroxybenzoate binding site.

Belongs to the intradiol ring-cleavage dioxygenase family. The enzyme is an oligomer of 12 copies of the alpha and beta chains. Requires Fe(3+) as cofactor.

The catalysed reaction is 3,4-dihydroxybenzoate + O2 = 3-carboxy-cis,cis-muconate + 2 H(+). The protein operates within aromatic compound metabolism; beta-ketoadipate pathway; 3-carboxy-cis,cis-muconate from 3,4-dihydroxybenzoate: step 1/1. In terms of biological role, plays an essential role in the utilization of numerous aromatic and hydroaromatic compounds via the beta-ketoadipate pathway. This is Protocatechuate 3,4-dioxygenase alpha chain (pcaG) from Pseudomonas putida (Arthrobacter siderocapsulatus).